Consider the following 80-residue polypeptide: uncharacterized protein (80 aa).

The next 3 membrane-spanning stretches (helical) occupy residues 2–22, 32–52, and 55–75; these read INLW…IGQV, FFGM…LTGG, and LVTG…RFMV.

The protein resides in the cell membrane. This is an uncharacterized protein from Escherichia coli (strain K12).